The following is a 131-amino-acid chain: Insertion element IS1 protein InsB (131 aa).

This sequence belongs to the transposase 27 family.

Its function is as follows. Absolutely required for transposition of IS1. In Shigella sonnei, this protein is Insertion element IS1 protein InsB (insB).